The chain runs to 264 residues: Teichoic acids export ATP-binding protein TagH (264 aa).

Positions 24 to 243 (IKDALIPKNK…YEAFLKTFKK (220 aa)) constitute an ABC transporter domain. 57–64 (GINGSGKS) lines the ATP pocket.

This sequence belongs to the ABC transporter superfamily. Teichoic acids exporter (TC 3.A.1.104.1) family. In terms of assembly, the complex is composed of two ATP-binding proteins (TagH) and two transmembrane proteins (TagG).

The protein localises to the cell membrane. The enzyme catalyses ATP + H2O + teichoic acidSide 1 = ADP + phosphate + teichoic acidSide 2.. Its function is as follows. Part of the ABC transporter complex TagGH involved in teichoic acids export. Responsible for energy coupling to the transport system. In Staphylococcus epidermidis (strain ATCC 35984 / DSM 28319 / BCRC 17069 / CCUG 31568 / BM 3577 / RP62A), this protein is Teichoic acids export ATP-binding protein TagH.